The chain runs to 766 residues: AMP deaminase 3 (766 aa).

Phosphoserine occurs at positions 85 and 107. Residues 89–114 (QMPTQQDWKGPPTASPAMSPATPLVP) are disordered. The segment covering 99–110 (PPTASPAMSPAT) has biased composition (low complexity). Positions 316 and 318 each coordinate Zn(2+). Residues H318 and 387–392 (KFNSKY) each bind substrate. Residue H585 participates in Zn(2+) binding. A substrate-binding site is contributed by E588. Residue H607 is the Proton acceptor of the active site. D662 contacts Zn(2+). 663 to 666 (DPMQ) is a binding site for substrate.

This sequence belongs to the metallo-dependent hydrolases superfamily. Adenosine and AMP deaminases family. In terms of assembly, homotetramer. Zn(2+) is required as a cofactor. Found in heart, lung brain, spleen, kidney and to a lesser extent in liver.

It carries out the reaction AMP + H2O + H(+) = IMP + NH4(+). It functions in the pathway purine metabolism; IMP biosynthesis via salvage pathway; IMP from AMP: step 1/1. Functionally, AMP deaminase plays a critical role in energy metabolism. The sequence is that of AMP deaminase 3 from Mus musculus (Mouse).